Reading from the N-terminus, the 301-residue chain is ATP synthase gamma chain (301 aa).

Belongs to the ATPase gamma chain family. In terms of assembly, F-type ATPases have 2 components, CF(1) - the catalytic core - and CF(0) - the membrane proton channel. CF(1) has five subunits: alpha(3), beta(3), gamma(1), delta(1), epsilon(1). CF(0) has three main subunits: a, b and c.

Its subcellular location is the cell inner membrane. In terms of biological role, produces ATP from ADP in the presence of a proton gradient across the membrane. The gamma chain is believed to be important in regulating ATPase activity and the flow of protons through the CF(0) complex. The chain is ATP synthase gamma chain from Helicobacter pylori (strain ATCC 700392 / 26695) (Campylobacter pylori).